A 559-amino-acid polypeptide reads, in one-letter code: MARKGNPISVRLDLNRSSDPSRFSDYYYGKSLYQDVNLRSYFSSIRPPTRLTFGFRLGRCIILHFPKRTFIHFFLPRRPLRLKRRDKSRPGKDKGRWWAFGKVGPIGCLHSSEGTEEERNEVRGRGAGKRVESIDREKQNEIRIWPKKMQRYGYHDRTPSRKKNFSKSLRVSGAFKHPKYAGVVNDIAFLIENDDSFIKTKLFKFFFLPKKSRSDGPTSHLLKRTLPAVRPSLNYSVMQYFFNTKNKMHFDPVVVLNHFVAPGVAEPSTMGGAKGGSLDKRIRSRIAFFVESSTSDKKCLARAKKRLIHFIRQANDLRFAGTTKTTISLFPFFGATFFFSRDGVGVYNNPFYEYAREQLLGQLRIKCRNLMGKDKVMELIEKFIDLGRIGKLIKGIEMMIEIILRKRRIPYGYNSYLNEVQKMRSFLSNRTNTNTLIESVKIKSVYQSASLIAQDISFQLRNNPISFRSIFSKIVKDIPLIMPKGVEGIRICCSGRLGGAEIARTECGKYGKTSCNVFNQKIDYAPAEVSTRDGISGVKVRISYSQNKKGRAISETYEI.

Positions 113–134 are disordered; the sequence is EGTEEERNEVRGRGAGKRVESI. Basic and acidic residues predominate over residues 120 to 134; it reads NEVRGRGAGKRVESI.

It belongs to the universal ribosomal protein uS3 family.

The protein localises to the mitochondrion. In Zea mays (Maize), this protein is Small ribosomal subunit protein uS3m (RPS3).